The following is a 543-amino-acid chain: Glutamyl-tRNA(Gln) amidotransferase subunit A, chloroplastic/mitochondrial (543 aa).

Catalysis depends on charge relay system residues Lys123 and Ser198. Ser222 functions as the Acyl-ester intermediate in the catalytic mechanism.

The protein belongs to the amidase family. GatA subfamily. Subunit of the heterotrimeric GatCAB amidotransferase (AdT) complex, composed of A, B and C subunits.

Its subcellular location is the mitochondrion. It localises to the plastid. The protein localises to the chloroplast stroma. The catalysed reaction is L-glutamyl-tRNA(Gln) + L-glutamine + ATP + H2O = L-glutaminyl-tRNA(Gln) + L-glutamate + ADP + phosphate + H(+). Its function is as follows. Allows the formation of correctly charged Gln-tRNA(Gln) through the transamidation of misacylated Glu-tRNA(Gln) in chloroplasts and mitochondria. The reaction takes place in the presence of glutamine and ATP through an activated gamma-phospho-Glu-tRNA(Gln). The chain is Glutamyl-tRNA(Gln) amidotransferase subunit A, chloroplastic/mitochondrial from Oryza sativa subsp. indica (Rice).